The primary structure comprises 478 residues: Glutamate--tRNA ligase (478 aa).

The short motif at 9-19 (PSPTGLLHIGT) is the 'HIGH' region element. Positions 248 to 252 (KLSKR) match the 'KMSKS' region motif. Residue Lys251 participates in ATP binding.

It belongs to the class-I aminoacyl-tRNA synthetase family. Glutamate--tRNA ligase type 1 subfamily. In terms of assembly, monomer.

It is found in the cytoplasm. The catalysed reaction is tRNA(Glu) + L-glutamate + ATP = L-glutamyl-tRNA(Glu) + AMP + diphosphate. In terms of biological role, catalyzes the attachment of glutamate to tRNA(Glu) in a two-step reaction: glutamate is first activated by ATP to form Glu-AMP and then transferred to the acceptor end of tRNA(Glu). In Prochlorococcus marinus subsp. pastoris (strain CCMP1986 / NIES-2087 / MED4), this protein is Glutamate--tRNA ligase.